The following is a 470-amino-acid chain: Argininosuccinate lyase (470 aa).

It belongs to the lyase 1 family. Argininosuccinate lyase subfamily.

Its subcellular location is the cytoplasm. It carries out the reaction 2-(N(omega)-L-arginino)succinate = fumarate + L-arginine. It participates in amino-acid biosynthesis; L-arginine biosynthesis; L-arginine from L-ornithine and carbamoyl phosphate: step 3/3. In Mycobacterium sp. (strain MCS), this protein is Argininosuccinate lyase.